A 1314-amino-acid chain; its full sequence is Tetratricopeptide repeat protein 21A (1314 aa).

19 TPR repeats span residues 110 to 143 (STAL…SSGS), 214 to 247 (LPAL…DENN), 326 to 359 (ALVA…EENR), 494 to 527 (MEPL…DPTF), 529 to 561 (DAHL…NFQV), 565 to 598 (PLYH…PTSK), 616 to 649 (ASIL…FSGT), 721 to 754 (PHSS…NPHD), 755 to 788 (ASLV…SGQD), 790 to 821 (LCCE…DSGV), 831 to 863 (VKCL…QSRI), 883 to 916 (ASIC…SPTD), 918 to 950 (KVVL…EQTH), 951 to 984 (ERAA…APDN), 986 to 1018 (LVLN…SSRV), 1022 to 1055 (PGFN…STWG), 1195 to 1228 (EKSW…NKSC), 1230 to 1262 (RAYE…SHQA), and 1264 to 1297 (PAIG…HPKY).

It belongs to the TTC21 family. In terms of assembly, interacts with IFT20. Interacts with IFT52. Interacts with IFT140. Interacts with CEP78; regulating IFT20 stability and localization.

Its function is as follows. Intraflagellar transport (IFT)-associated protein required for spermatogenesis. Required for sperm flagellar formation and intraflagellar transport. This is Tetratricopeptide repeat protein 21A (Ttc21a) from Mus musculus (Mouse).